The primary structure comprises 100 residues: Small ribosomal subunit protein uS14c (100 aa).

Belongs to the universal ribosomal protein uS14 family. Part of the 30S ribosomal subunit.

The protein resides in the plastid. In terms of biological role, binds 16S rRNA, required for the assembly of 30S particles. The protein is Small ribosomal subunit protein uS14c of Aneura mirabilis (Parasitic liverwort).